The sequence spans 567 residues: Polyadenylate-binding protein-interacting protein 7 (567 aa).

The tract at residues 1 to 22 (MSLTKKASEPKLSGTSIKPTTL) is disordered. Over residues 13–22 (SGTSIKPTTL) the composition is skewed to polar residues. A PAM2-like motif is present at residues 21 to 31 (TLNPHAAEFVP). One can recognise a CUE domain in the interval 215–259 (DMEVNPVDFLASQFPGFAAESLAEVYFANGCDLQLTIEMLTQLEL). The disordered stretch occupies residues 355–387 (RNDSADSSIGSSRNSGAYKSGRGRSIYSDKLQS). The span at 359–371 (ADSSIGSSRNSGA) shows a compositional bias: polar residues. In terms of domain architecture, Smr spans 485–567 (IDLHGLHVSE…QAGLLRVIIY (83 aa)).

In terms of assembly, interacts with MPC and PAB2. As to expression, expressed in cauline leaves, stems, rosette leaves, immature siliques and primary inflorescences.

The sequence is that of Polyadenylate-binding protein-interacting protein 7 (CID7) from Arabidopsis thaliana (Mouse-ear cress).